We begin with the raw amino-acid sequence, 477 residues long: Histone-lysine N-methyltransferase SUV39H2 (477 aa).

Residues Met-1 to Arg-59 form a disordered region. A compositionally biased stretch (basic residues) spans Pro-27–Arg-37. Positions Tyr-118–Arg-176 constitute a Chromo domain. The 59-residue stretch at Phe-256–Gly-314 folds into the Pre-SET domain. The Zn(2+) site is built by Cys-258, Cys-260, Cys-263, Cys-268, Cys-269, Cys-296, Cys-300, Cys-302, and Cys-306. Residues Tyr-317–Gln-440 enclose the SET domain. S-adenosyl-L-methionine is bound by residues Cys-328 to Trp-330, Tyr-371, and Asn-397 to His-398. Cys-400 contacts Zn(2+). Residues Ser-448, Ser-451, and Ser-455 each carry the phosphoserine modification. A Post-SET domain is found at Val-461–Asn-477. Zn(2+) contacts are provided by Cys-465, Cys-467, and Cys-472.

The protein belongs to the class V-like SAM-binding methyltransferase superfamily. Histone-lysine methyltransferase family. Suvar3-9 subfamily. In terms of assembly, interacts with SMAD5. The large PER complex involved in the histone methylation is composed of at least PER2, CBX3, TRIM28, SUV39H1 and/or SUV39H2; CBX3 mediates the formation of the complex. In terms of processing, ubiquitinated by the DCX(DCAF13) E3 ubiquitin ligase complex, leading to its degradation. In terms of tissue distribution, testis specific; predominant expression in type B spermatogonia and preleptotene spermatocytes.

It is found in the nucleus. Its subcellular location is the chromosome. The protein resides in the centromere. It carries out the reaction L-lysyl(9)-[histone H3] + 3 S-adenosyl-L-methionine = N(6),N(6),N(6)-trimethyl-L-lysyl(9)-[histone H3] + 3 S-adenosyl-L-homocysteine + 3 H(+). Histone methyltransferase that specifically trimethylates 'Lys-9' of histone H3 using monomethylated H3 'Lys-9' as substrate. H3 'Lys-9' trimethylation represents a specific tag for epigenetic transcriptional repression by recruiting HP1 (CBX1, CBX3 and/or CBX5) proteins to methylated histones. Mainly functions in heterochromatin regions, thereby playing a central role in the establishment of constitutive heterochromatin at pericentric and telomere regions. H3 'Lys-9' trimethylation is also required to direct DNA methylation at pericentric repeats. SUV39H1 is targeted to histone H3 via its interaction with RB1 and is involved in many processes, such as cell cycle regulation, transcriptional repression and regulation of telomere length. May participate in regulation of higher-order chromatin organization during spermatogenesis. Recruited by the large PER complex to the E-box elements of the circadian target genes such as PER2 itself or PER1, contributes to the conversion of local chromatin to a heterochromatin-like repressive state through H3 'Lys-9' trimethylation. The sequence is that of Histone-lysine N-methyltransferase SUV39H2 (Suv39h2) from Mus musculus (Mouse).